We begin with the raw amino-acid sequence, 39 residues long: Glutenin, high molecular weight subunit PC237 (39 aa).

The protein belongs to the gliadin/glutenin family. Disulfide-bridge linked aggregates.

Glutenins are high-molecular weight seed storage proteins of wheat endosperm. Thought to be responsible for the visco-elastic property of wheat dough. This Triticum aestivum (Wheat) protein is Glutenin, high molecular weight subunit PC237.